The sequence spans 504 residues: Malonyl-CoA decarboxylase, mitochondrial (504 aa).

A mitochondrion-targeting transit peptide spans 1–50 (MRGLRRGLSRLGPRLGPWAVPRSLRRVLRAAGPWRGQSSAGSVSERGGAS). Positions 51-201 (MEEVLSRSVP…VLKNMLSEWF (151 aa)) are alpha-helical domain. The tract at residues 202–504 (STGFLNLERV…VSQFQQNSKL (303 aa)) is catalytic domain. Residue Ser-340 is the Proton acceptor of the active site. His-434 functions as the Proton donor in the catalytic mechanism. Positions 502 to 504 (SKL) match the Microbody targeting signal motif.

The protein resides in the mitochondrion. The protein localises to the cytoplasm. Its subcellular location is the peroxisome. It carries out the reaction malonyl-CoA + H(+) = acetyl-CoA + CO2. Its pathway is metabolic intermediate biosynthesis; acetyl-CoA biosynthesis; acetyl-CoA from malonyl-CoA: step 1/1. Catalyzes the conversion of malonyl-CoA to acetyl-CoA. In the fatty acid biosynthesis MCD selectively removes malonyl-CoA and thus assures that methyl-malonyl-CoA is the only chain elongating substrate for fatty acid synthase and that fatty acids with multiple methyl side chains are produced. This chain is Malonyl-CoA decarboxylase, mitochondrial (MLYCD), found in Anser anser anser (Western greylag goose).